Here is a 65-residue protein sequence, read N- to C-terminus: Temporin-LK1 (65 aa).

The signal sequence occupies residues 1–22; sequence MFTMKKSLLLLFFLGAINLPLC. A propeptide spanning residues 23-44 is cleaved from the precursor; sequence QEERNAEEERRDGDDEGSVEVQ. Phenylalanine amide is present on Phe-63.

As to expression, expressed by the skin glands.

It localises to the secreted. Its function is as follows. Has antimicrobial activity against Gram-positive bacteria S.aureus ATCC 2592 (MIC=2.5 uM), S.aureus ATCC 43300 (MIC=2.5 uM) and B.subtilis (MIC=15.0 uM), against Gram-negative bacteria E.coli ML-35P (MIC=30.0 uM), P.aeruginosa PA01 (MIC=2.5 uM) and P.aeruginosa ATCC 27853 (MIC=2.5 uM) and against fungus C.albicans ATCC 2002 (MIC=5.0 uM). This chain is Temporin-LK1, found in Limnonectes kuhlii (Kuhl's Creek frog).